Consider the following 38-residue polypeptide: Photosystem II reaction center protein X 2 (38 aa).

A helical membrane pass occupies residues F8–F28.

Belongs to the PsbX family. Type 1 subfamily. As to quaternary structure, PSII is composed of 1 copy each of membrane proteins PsbA, PsbB, PsbC, PsbD, PsbE, PsbF, PsbH, PsbI, PsbJ, PsbK, PsbL, PsbM, PsbT, PsbX, PsbY, PsbZ, Psb30/Ycf12, peripheral proteins PsbO, CyanoQ (PsbQ), PsbU, PsbV and a large number of cofactors. It forms dimeric complexes.

The protein resides in the cellular thylakoid membrane. In terms of biological role, involved in the binding and/or turnover of quinones at the Q(B) site of photosystem II (PSII). PSII is a light-driven water plastoquinone oxidoreductase, using light energy to abstract electrons from H(2)O, generating a proton gradient subsequently used for ATP formation. The chain is Photosystem II reaction center protein X 2 from Synechococcus sp. (strain JA-3-3Ab) (Cyanobacteria bacterium Yellowstone A-Prime).